We begin with the raw amino-acid sequence, 268 residues long: Xyloglucan endotransglucosylase protein 7 (268 aa).

A GH16 domain is found at 1-196 (MNAEGGNLHR…WTKAPFTASY (196 aa)). E82 (nucleophile) is an active-site residue. The Proton donor role is filled by E86. Position 86 (E86) interacts with xyloglucan. N90 carries N-linked (GlcNAc...) asparagine glycosylation. Residues 99 to 101 (HTN), 109 to 111 (NRE), 175 to 176 (DW), and G180 contribute to the xyloglucan site. 2 disulfide bridges follow: C204/C213 and C251/C265. R256 is a xyloglucan binding site.

It belongs to the glycosyl hydrolase 16 family. XTH group 2 subfamily. Post-translationally, contains at least one intrachain disulfide bond essential for its enzymatic activity. As to expression, expressed at a very high level in flowers and stems (picked at anthesis), and at a lower level in ripe leaves and fruits.

It localises to the cytoplasm. It carries out the reaction breaks a beta-(1-&gt;4) bond in the backbone of a xyloglucan and transfers the xyloglucanyl segment on to O-4 of the non-reducing terminal glucose residue of an acceptor, which can be a xyloglucan or an oligosaccharide of xyloglucan.. In terms of biological role, catalyzes xyloglucan endotransglycosylation (XET). Cleaves and religates xyloglucan polymers. Does not catalyze xyloglucan endohydrolysis (XEH). Probably involved in cell wall assembly and synthesis in fast growing tissues and in the maintenance of firmness in mature fruits. The chain is Xyloglucan endotransglucosylase protein 7 from Diospyros kaki (Kaki persimmon).